A 439-amino-acid chain; its full sequence is uncharacterized protein (439 aa).

A DAGKc domain is found at 65–208 (TRPKRVFVLV…VYAFELTTEG (144 aa)).

This is an uncharacterized protein from Caenorhabditis elegans.